A 255-amino-acid chain; its full sequence is Imidazole glycerol phosphate synthase subunit HisF (255 aa).

Active-site residues include Asp11 and Asp130.

The protein belongs to the HisA/HisF family. Heterodimer of HisH and HisF.

The protein resides in the cytoplasm. The enzyme catalyses 5-[(5-phospho-1-deoxy-D-ribulos-1-ylimino)methylamino]-1-(5-phospho-beta-D-ribosyl)imidazole-4-carboxamide + L-glutamine = D-erythro-1-(imidazol-4-yl)glycerol 3-phosphate + 5-amino-1-(5-phospho-beta-D-ribosyl)imidazole-4-carboxamide + L-glutamate + H(+). It functions in the pathway amino-acid biosynthesis; L-histidine biosynthesis; L-histidine from 5-phospho-alpha-D-ribose 1-diphosphate: step 5/9. Functionally, IGPS catalyzes the conversion of PRFAR and glutamine to IGP, AICAR and glutamate. The HisF subunit catalyzes the cyclization activity that produces IGP and AICAR from PRFAR using the ammonia provided by the HisH subunit. The polypeptide is Imidazole glycerol phosphate synthase subunit HisF (Exiguobacterium sp. (strain ATCC BAA-1283 / AT1b)).